Here is a 478-residue protein sequence, read N- to C-terminus: Proline--tRNA ligase (478 aa).

This sequence belongs to the class-II aminoacyl-tRNA synthetase family. ProS type 3 subfamily. In terms of assembly, homodimer.

Its subcellular location is the cytoplasm. The catalysed reaction is tRNA(Pro) + L-proline + ATP = L-prolyl-tRNA(Pro) + AMP + diphosphate. Functionally, catalyzes the attachment of proline to tRNA(Pro) in a two-step reaction: proline is first activated by ATP to form Pro-AMP and then transferred to the acceptor end of tRNA(Pro). This chain is Proline--tRNA ligase, found in Clostridium novyi (strain NT).